Here is a 209-residue protein sequence, read N- to C-terminus: Small ribosomal subunit protein uS3 (209 aa).

A KH type-2 domain is found at 38–107; it reads IRKFIKNRYY…RVVINIEEIK (70 aa).

The protein belongs to the universal ribosomal protein uS3 family. In terms of assembly, part of the 30S ribosomal subunit. Forms a tight complex with proteins S10 and S14.

In terms of biological role, binds the lower part of the 30S subunit head. Binds mRNA in the 70S ribosome, positioning it for translation. The protein is Small ribosomal subunit protein uS3 of Thermotoga petrophila (strain ATCC BAA-488 / DSM 13995 / JCM 10881 / RKU-1).